The following is a 394-amino-acid chain: Elongation factor Tu 1 (394 aa).

A tr-type G domain is found at 10–204 (KPHVNVGTIG…ALDSYIPEPE (195 aa)). Residues 19–26 (GHVDHGKT) are G1. 19–26 (GHVDHGKT) contacts GTP. Mg(2+) is bound at residue Thr-26. The tract at residues 60 to 64 (GITIS) is G2. The G3 stretch occupies residues 81–84 (DCPG). Residues 81-85 (DCPGH) and 136-139 (NKCD) each bind GTP. Residues 136-139 (NKCD) form a G4 region. A G5 region spans residues 174–176 (SAL).

This sequence belongs to the TRAFAC class translation factor GTPase superfamily. Classic translation factor GTPase family. EF-Tu/EF-1A subfamily. In terms of assembly, monomer.

Its subcellular location is the cytoplasm. It carries out the reaction GTP + H2O = GDP + phosphate + H(+). In terms of biological role, GTP hydrolase that promotes the GTP-dependent binding of aminoacyl-tRNA to the A-site of ribosomes during protein biosynthesis. This chain is Elongation factor Tu 1, found in Vibrio vulnificus (strain YJ016).